The primary structure comprises 113 residues: Large ribosomal subunit protein bL17 (113 aa).

It belongs to the bacterial ribosomal protein bL17 family. Part of the 50S ribosomal subunit. Contacts protein L32.

The polypeptide is Large ribosomal subunit protein bL17 (Clostridium botulinum (strain Alaska E43 / Type E3)).